The sequence spans 28 residues: Chassatide C12 (28 aa).

The segment at residues 1–28 (EYCGESCYLIPCFTPGCYCVSRQCVNKN) is a cross-link (cyclopeptide (Glu-Asn)). Intrachain disulfides connect C3-C17, C7-C19, and C12-C24.

Post-translationally, this is a cyclic peptide. In terms of tissue distribution, expressed in fruit, pedicel, leaf and stem but not in root (at protein level).

Functionally, probably participates in a plant defense mechanism. This chain is Chassatide C12, found in Chassalia chartacea (Chassalia curviflora).